Consider the following 178-residue polypeptide: MTQMTTADVPSMGRRQFMNLLTFGTVTGVALGALYPVAQYFTPYRAGGGGGGTNAKDELGNNVSASGWLSTHPVGDRSLVQGLKGDPTYLIVEGEDAITSYGINAICTHLGCVVPWNSGANKYMCPCHGSQYDSTGKVVRGPAPLSLAIAHVSIEDDQVLVSQWTETDFRTGTDPWWG.

The chain crosses the membrane as a helical span at residues L20–T42. The region spanning T71–V161 is the Rieske domain. 4 residues coordinate [2Fe-2S] cluster: C107, H109, C125, and H128. C112 and C127 form a disulfide bridge.

The protein belongs to the Rieske iron-sulfur protein family. As to quaternary structure, the 4 large subunits of the cytochrome b6-f complex are cytochrome b6, subunit IV (17 kDa polypeptide, PetD), cytochrome f and the Rieske protein, while the 4 small subunits are PetG, PetL, PetM and PetN. The complex functions as a dimer. Requires [2Fe-2S] cluster as cofactor.

The protein localises to the cellular thylakoid membrane. It catalyses the reaction 2 oxidized [plastocyanin] + a plastoquinol + 2 H(+)(in) = 2 reduced [plastocyanin] + a plastoquinone + 4 H(+)(out). Component of the cytochrome b6-f complex, which mediates electron transfer between photosystem II (PSII) and photosystem I (PSI), cyclic electron flow around PSI, and state transitions. This chain is Cytochrome b6-f complex iron-sulfur subunit, found in Prochlorococcus marinus (strain NATL1A).